We begin with the raw amino-acid sequence, 93 residues long: EDIWKKFELLPTPPLSPSRAALPGDPGELGAVAGDCSLMGFGLTDPLDWASELLLLPGDDIWGASDGDLFGSVLDTTDNSIIIQDCMWSGFSA.

In terms of assembly, efficient DNA binding requires dimerization with another bHLH protein. Binds DNA as a heterodimer with MAX. In terms of tissue distribution, barely detectable in most tissues assayed.

It is found in the nucleus. May function as a transcription factor. This is N-myc protein (mycn) from Danio rerio (Zebrafish).